Here is a 253-residue protein sequence, read N- to C-terminus: Prolactin-7A2 (253 aa).

An N-terminal signal peptide occupies residues 1-30 (MSFSFSQPCPSGALLLVVVSSLLLWENVAS). Residues N36, N103, and N135 are each glycosylated (N-linked (GlcNAc...) asparagine). 2 disulfide bridges follow: C101-C218 and C235-C244.

It belongs to the somatotropin/prolactin family. As to expression, expression restricted to the placental tissue. Expressed only in the spongiotrophoblasts.

The protein localises to the secreted. This is Prolactin-7A2 (Prl7a2) from Mus musculus (Mouse).